We begin with the raw amino-acid sequence, 396 residues long: Metallophosphoesterase 1 (396 aa).

A helical membrane pass occupies residues Ile-27–Phe-47. Positions 77, 119, 157, 249, 303, and 305 each coordinate a divalent metal cation. Residues Val-356–Leu-376 form a helical membrane-spanning segment. A Di-lysine motif motif is present at residues Lys-392 to Arg-396.

Belongs to the metallophosphoesterase superfamily. MPPE1 family. Interacts with GPI-anchor proteins (via the GPI portion). Interacts with TMED10. Requires Mn(2+) as cofactor.

The protein resides in the endoplasmic reticulum-Golgi intermediate compartment membrane. Functionally, metallophosphoesterase that catalyzes the removal of a side-chain ethanolamine-phosphate (EtNP) from the second mannose of the GPI-anchor protein intermediate. Participates in the glycan remodeling steps of GPI-anchor maturation to allow an efficient transport of GPI-anchor proteins from the endoplasmic reticulum to the Golgi. In Macaca fascicularis (Crab-eating macaque), this protein is Metallophosphoesterase 1.